The sequence spans 179 residues: MIKYIKGDLFTHTPSSRSAISIFAHACNCRGSWGGGIATVFYRKFPSAYKIYADYCSTHADDPSKLLGTTLLIPSSSSDPGNENGQKIVYVACLFTSDFYGKKKLTPGDIAANTDLSMKDLDTQLESLKEEKEIESTDQGEVVVNMPKINAGLFAVPWEITEDVLNKFNNLHINVYVVD.

The 179-residue stretch at 1–179 (MIKYIKGDLF…NLHINVYVVD (179 aa)) folds into the Macro domain. Residues 7–9 (GDL), 26–28 (ACN), 33–38 (WGGGIA), and 149–155 (INAGLFA) each bind substrate.

The protein belongs to the POA1 family.

It catalyses the reaction ADP-alpha-D-ribose 1''-phosphate + H2O = ADP-D-ribose + phosphate. Highly specific phosphatase involved in the metabolism of ADP-ribose 1''-phosphate (Appr1p) which is produced as a consequence of tRNA splicing. The protein is ADP-ribose 1''-phosphate phosphatase (POA1) of Debaryomyces hansenii (strain ATCC 36239 / CBS 767 / BCRC 21394 / JCM 1990 / NBRC 0083 / IGC 2968) (Yeast).